We begin with the raw amino-acid sequence, 69 residues long: Large ribosomal subunit protein bL31 (69 aa).

Zn(2+)-binding residues include C16, C18, C36, and C39.

It belongs to the bacterial ribosomal protein bL31 family. Type A subfamily. As to quaternary structure, part of the 50S ribosomal subunit. The cofactor is Zn(2+).

Functionally, binds the 23S rRNA. The chain is Large ribosomal subunit protein bL31 from Kosmotoga olearia (strain ATCC BAA-1733 / DSM 21960 / TBF 19.5.1).